Here is a 190-residue protein sequence, read N- to C-terminus: LOB domain-containing protein 1 (190 aa).

Residues 1-11 show a composition bias toward polar residues; that stretch reads MESKSDASVAT. Residues 1 to 27 form a disordered region; that stretch reads MESKSDASVATTPIISSSSSPPPSLSP. The region spanning 32 to 133 is the LOB domain; it reads SPCAACKILR…AQLAKAQVEM (102 aa).

This sequence belongs to the LOB domain-containing protein family. Expressed in young shoots, roots, stems, leaves and flowers.

The chain is LOB domain-containing protein 1 (LBD1) from Arabidopsis thaliana (Mouse-ear cress).